Consider the following 222-residue polypeptide: MTAAVPAGATGRAKKVVVFDYGFGNVRSAERALARAGADVEITRDYDKAMNADGLLVPGVGAFAACMEGLKAARGDWIVDRRLSGGRPVMGICVGMQILFSRGIEHDVEAEGLDEWPGTVGPLEADVVPHMGWNTVEAPADSQLFAGLDADARFYFVHSYAVHEWTQESHNPLIAEPRVTWSTHGKPFVAAVENGALWATQFHPEKSGDAGAQLLTNWIETL.

The Glutamine amidotransferase type-1 domain occupies 15-222 (KVVVFDYGFG…QLLTNWIETL (208 aa)). The active-site Nucleophile is the C93. Catalysis depends on residues H203 and E205.

In terms of assembly, heterodimer of HisH and HisF.

It localises to the cytoplasm. It carries out the reaction 5-[(5-phospho-1-deoxy-D-ribulos-1-ylimino)methylamino]-1-(5-phospho-beta-D-ribosyl)imidazole-4-carboxamide + L-glutamine = D-erythro-1-(imidazol-4-yl)glycerol 3-phosphate + 5-amino-1-(5-phospho-beta-D-ribosyl)imidazole-4-carboxamide + L-glutamate + H(+). It catalyses the reaction L-glutamine + H2O = L-glutamate + NH4(+). It functions in the pathway amino-acid biosynthesis; L-histidine biosynthesis; L-histidine from 5-phospho-alpha-D-ribose 1-diphosphate: step 5/9. IGPS catalyzes the conversion of PRFAR and glutamine to IGP, AICAR and glutamate. The HisH subunit catalyzes the hydrolysis of glutamine to glutamate and ammonia as part of the synthesis of IGP and AICAR. The resulting ammonia molecule is channeled to the active site of HisF. The protein is Imidazole glycerol phosphate synthase subunit HisH (hisH) of Streptomyces coelicolor (strain ATCC BAA-471 / A3(2) / M145).